The primary structure comprises 813 residues: Calpain-7 (813 aa).

Met1 is modified (N-acetylmethionine). A Phosphothreonine modification is found at Thr95. A Calpain catalytic domain is found at 232 to 540; the sequence is RERFAYPMPF…YDVIYLSWNP (309 aa). Residues Cys290, His458, and Asn478 contribute to the active site. The tract at residues 541–701 is domain III; sequence GLFKESTCIH…INGKWSGQSA (161 aa). A domain N region spans residues 702–813; it reads GGCGNFQETH…IIPIKITQLQ (112 aa).

This sequence belongs to the peptidase C2 family. Ubiquitous.

The protein localises to the nucleus. Functionally, calcium-regulated non-lysosomal thiol-protease. The sequence is that of Calpain-7 (CAPN7) from Homo sapiens (Human).